A 536-amino-acid polypeptide reads, in one-letter code: Putative beta-xylosidase (536 aa).

The active-site Proton acceptor is the D14. E186 functions as the Proton donor in the catalytic mechanism.

The protein belongs to the glycosyl hydrolase 43 family.

The enzyme catalyses Hydrolysis of (1-&gt;4)-beta-D-xylans, to remove successive D-xylose residues from the non-reducing termini.. The protein is Putative beta-xylosidase (yagH) of Escherichia coli (strain K12).